The chain runs to 123 residues: Small ribosomal subunit protein bS16 (123 aa).

The protein belongs to the bacterial ribosomal protein bS16 family.

The chain is Small ribosomal subunit protein bS16 from Treponema pallidum (strain Nichols).